A 90-amino-acid chain; its full sequence is MAQPAFLSALRSRLRSPQPQAPALPHLQPPRRGFHVELGAREKALLEEDTALKRFKSYKNSVKQVSKVGNILTGVVLFACAYEIVALANS.

A mitochondrion-targeting transit peptide spans 1 to 41; the sequence is MAQPAFLSALRSRLRSPQPQAPALPHLQPPRRGFHVELGAR.

As to quaternary structure, component of complex II composed of eight subunits in plants: four classical SDH subunits SDH1, SDH2, SDH3 and SDH4 (a flavoprotein (FP), an iron-sulfur protein (IP), and a cytochrome b composed of a large and a small subunit.), as well as four subunits unknown in mitochondria from bacteria and heterotrophic eukaryotes.

It is found in the mitochondrion inner membrane. Its pathway is carbohydrate metabolism; tricarboxylic acid cycle. The chain is Succinate dehydrogenase subunit 7, mitochondrial from Oryza sativa subsp. japonica (Rice).